Consider the following 139-residue polypeptide: Putative pre-16S rRNA nuclease (139 aa).

It belongs to the YqgF nuclease family.

It localises to the cytoplasm. Could be a nuclease involved in processing of the 5'-end of pre-16S rRNA. In Streptococcus suis (strain 98HAH33), this protein is Putative pre-16S rRNA nuclease.